A 249-amino-acid chain; its full sequence is Aspartate/glutamate leucyltransferase (249 aa).

The protein belongs to the R-transferase family. Bpt subfamily.

It is found in the cytoplasm. It catalyses the reaction N-terminal L-glutamyl-[protein] + L-leucyl-tRNA(Leu) = N-terminal L-leucyl-L-glutamyl-[protein] + tRNA(Leu) + H(+). The catalysed reaction is N-terminal L-aspartyl-[protein] + L-leucyl-tRNA(Leu) = N-terminal L-leucyl-L-aspartyl-[protein] + tRNA(Leu) + H(+). Functionally, functions in the N-end rule pathway of protein degradation where it conjugates Leu from its aminoacyl-tRNA to the N-termini of proteins containing an N-terminal aspartate or glutamate. The chain is Aspartate/glutamate leucyltransferase from Xanthobacter autotrophicus (strain ATCC BAA-1158 / Py2).